A 224-amino-acid chain; its full sequence is Urease accessory protein UreF (224 aa).

Belongs to the UreF family. In terms of assembly, ureD, UreF and UreG form a complex that acts as a GTP-hydrolysis-dependent molecular chaperone, activating the urease apoprotein by helping to assemble the nickel containing metallocenter of UreC. The UreE protein probably delivers the nickel.

It localises to the cytoplasm. Its function is as follows. Required for maturation of urease via the functional incorporation of the urease nickel metallocenter. The chain is Urease accessory protein UreF from Citrobacter koseri (strain ATCC BAA-895 / CDC 4225-83 / SGSC4696).